The following is a 241-amino-acid chain: Uridylate kinase (241 aa).

14–17 (KLSG) serves as a coordination point for ATP. Residues 22 to 27 (GGLGMG) form an involved in allosteric activation by GTP region. Gly-56 contacts UMP. Positions 57 and 61 each coordinate ATP. UMP is bound by residues Asp-77 and 138-145 (TGNPFFTT). Residues Thr-165, Tyr-171, and Asp-174 each contribute to the ATP site.

This sequence belongs to the UMP kinase family. In terms of assembly, homohexamer.

It localises to the cytoplasm. The catalysed reaction is UMP + ATP = UDP + ADP. It functions in the pathway pyrimidine metabolism; CTP biosynthesis via de novo pathway; UDP from UMP (UMPK route): step 1/1. Its activity is regulated as follows. Allosterically activated by GTP. Inhibited by UTP. In terms of biological role, catalyzes the reversible phosphorylation of UMP to UDP. This Psychrobacter sp. (strain PRwf-1) protein is Uridylate kinase.